The following is a 312-amino-acid chain: 4-diphosphocytidyl-2-C-methyl-D-erythritol kinase (312 aa).

Residue lysine 18 is part of the active site. An ATP-binding site is contributed by 104–114 (PIAGGMGGGSA). Aspartate 146 is a catalytic residue.

Belongs to the GHMP kinase family. IspE subfamily.

It catalyses the reaction 4-CDP-2-C-methyl-D-erythritol + ATP = 4-CDP-2-C-methyl-D-erythritol 2-phosphate + ADP + H(+). Its pathway is isoprenoid biosynthesis; isopentenyl diphosphate biosynthesis via DXP pathway; isopentenyl diphosphate from 1-deoxy-D-xylulose 5-phosphate: step 3/6. Catalyzes the phosphorylation of the position 2 hydroxy group of 4-diphosphocytidyl-2C-methyl-D-erythritol. This chain is 4-diphosphocytidyl-2-C-methyl-D-erythritol kinase, found in Clavibacter michiganensis subsp. michiganensis (strain NCPPB 382).